Reading from the N-terminus, the 288-residue chain is Oxaloacetate decarboxylase (288 aa).

Position 47 (Ser47) interacts with substrate. Asp85 serves as a coordination point for Mg(2+). Positions 156 and 232 each coordinate substrate.

This sequence belongs to the isocitrate lyase/PEP mutase superfamily. Oxaloacetate decarboxylase family. As to quaternary structure, homotetramer; dimer of dimers. Mg(2+) is required as a cofactor.

It catalyses the reaction oxaloacetate + H(+) = pyruvate + CO2. Its function is as follows. Catalyzes the decarboxylation of oxaloacetate into pyruvate. Seems to play a role in maintaining cellular concentrations of bicarbonate and pyruvate. This chain is Oxaloacetate decarboxylase, found in Rhodopseudomonas palustris (strain TIE-1).